Consider the following 377-residue polypeptide: D-alanine--D-alanine ligase (377 aa).

The 207-residue stretch at 141-347 (KRILNQAGIR…YSELIDRLIQ (207 aa)) folds into the ATP-grasp domain. 171-226 (KEELGDLVFVKPAKQGSSVGIHKVDTEEEYETAMKDAFTYDYKVLVEAGIKNPREI) serves as a coordination point for ATP. Residues aspartate 301, glutamate 314, and asparagine 316 each contribute to the Mg(2+) site.

This sequence belongs to the D-alanine--D-alanine ligase family. Mg(2+) is required as a cofactor. It depends on Mn(2+) as a cofactor.

The protein localises to the cytoplasm. The enzyme catalyses 2 D-alanine + ATP = D-alanyl-D-alanine + ADP + phosphate + H(+). Its pathway is cell wall biogenesis; peptidoglycan biosynthesis. Its function is as follows. Cell wall formation. This is D-alanine--D-alanine ligase from Limosilactobacillus fermentum (strain NBRC 3956 / LMG 18251) (Lactobacillus fermentum).